The chain runs to 67 residues: Large ribosomal subunit protein uL29 (67 aa).

This sequence belongs to the universal ribosomal protein uL29 family.

In Methanosarcina mazei (strain ATCC BAA-159 / DSM 3647 / Goe1 / Go1 / JCM 11833 / OCM 88) (Methanosarcina frisia), this protein is Large ribosomal subunit protein uL29.